Consider the following 657-residue polypeptide: Pentatricopeptide repeat-containing protein At1g11710, mitochondrial (657 aa).

A mitochondrion-targeting transit peptide spans 1–74 (MFGHVFSRRT…REFRSSPKLA (74 aa)). PPR repeat units follow at residues 147-181 (SPDV…GFCV), 182-216 (SVHA…GYVE), 217-251 (NVNT…GVWP), 252-282 (NVVS…MGMM), 290-324 (NAVT…GVDC), 325-359 (NERT…GLVV), 360-394 (NTVI…NMQI), 395-429 (DRFT…KLVE), 430-464 (DIVC…GLSL), 465-499 (DAIS…NKTS), 500-530 (NLVI…MEIK), 531-565 (DIVT…DGEK), 568-602 (SLVT…GVVP), and 603-637 (DSIT…GVTP).

This sequence belongs to the PPR family. P subfamily.

It localises to the mitochondrion. The polypeptide is Pentatricopeptide repeat-containing protein At1g11710, mitochondrial (Arabidopsis thaliana (Mouse-ear cress)).